Here is a 163-residue protein sequence, read N- to C-terminus: Probable chemoreceptor glutamine deamidase CheD (163 aa).

It belongs to the CheD family.

The catalysed reaction is L-glutaminyl-[protein] + H2O = L-glutamyl-[protein] + NH4(+). Probably deamidates glutamine residues to glutamate on methyl-accepting chemotaxis receptors (MCPs), playing an important role in chemotaxis. This Borreliella burgdorferi (strain ATCC 35210 / DSM 4680 / CIP 102532 / B31) (Borrelia burgdorferi) protein is Probable chemoreceptor glutamine deamidase CheD.